Reading from the N-terminus, the 426-residue chain is Serine--tRNA ligase (426 aa).

Residue 233–235 (TSE) participates in L-serine binding. Residue 264 to 266 (RSE) coordinates ATP. E287 contributes to the L-serine binding site. Residue 351-354 (EISS) participates in ATP binding. S387 provides a ligand contact to L-serine.

The protein belongs to the class-II aminoacyl-tRNA synthetase family. Type-1 seryl-tRNA synthetase subfamily. As to quaternary structure, homodimer. The tRNA molecule binds across the dimer.

Its subcellular location is the cytoplasm. It catalyses the reaction tRNA(Ser) + L-serine + ATP = L-seryl-tRNA(Ser) + AMP + diphosphate + H(+). The catalysed reaction is tRNA(Sec) + L-serine + ATP = L-seryl-tRNA(Sec) + AMP + diphosphate + H(+). The protein operates within aminoacyl-tRNA biosynthesis; selenocysteinyl-tRNA(Sec) biosynthesis; L-seryl-tRNA(Sec) from L-serine and tRNA(Sec): step 1/1. Catalyzes the attachment of serine to tRNA(Ser). Is also able to aminoacylate tRNA(Sec) with serine, to form the misacylated tRNA L-seryl-tRNA(Sec), which will be further converted into selenocysteinyl-tRNA(Sec). The polypeptide is Serine--tRNA ligase (Xylella fastidiosa (strain M23)).